Here is a 449-residue protein sequence, read N- to C-terminus: Galactosyl transferase CpsE (449 aa).

Transmembrane regions (helical) follow at residues 5 to 22, 27 to 46, 59 to 78, 88 to 107, and 258 to 280; these read VVVY…TPNF, DLLF…DFYR, MVLK…FFIF, SFFT…NSFL, and FLDI…FLVP.

Belongs to the bacterial sugar transferase family.

Its subcellular location is the cell membrane. Its function is as follows. Galactosyl transferase is essential for the assembly of the group B streptococci (GBS) type III capsular polysaccharide. May be involved in the formation of either or both galactosidic bonds by catalyzing the addition of galactose to an oligosaccharide precursor or to a lipid intermediate. Type III capsular polysaccharide consists of a linear backbone with short side chains ending in residues of N-acetylneuraminic acid or sialic acid. The presence of sialic acid on the surface of the organism inhibits activation of the alternative pathway of complement and is thought to be an important element in the virulence function of the capsule. The protein is Galactosyl transferase CpsE (cpsE) of Streptococcus agalactiae serotype III (strain NEM316).